We begin with the raw amino-acid sequence, 309 residues long: HPr kinase/phosphorylase (309 aa).

Residues His-138 and Lys-159 contribute to the active site. 153–160 (GQSGVGKS) serves as a coordination point for ATP. Position 160 (Ser-160) interacts with Mg(2+). Asp-177 serves as the catalytic Proton acceptor; for phosphorylation activity. Proton donor; for dephosphorylation activity. An important for the catalytic mechanism of both phosphorylation and dephosphorylation region spans residues 201–210 (LEIRGLGIIN). Glu-202 is a Mg(2+) binding site. Arg-243 is an active-site residue. The tract at residues 264-269 (PVRPGR) is important for the catalytic mechanism of dephosphorylation.

The protein belongs to the HPrK/P family. Homohexamer. The cofactor is Mg(2+).

It catalyses the reaction [HPr protein]-L-serine + ATP = [HPr protein]-O-phospho-L-serine + ADP + H(+). The catalysed reaction is [HPr protein]-O-phospho-L-serine + phosphate + H(+) = [HPr protein]-L-serine + diphosphate. Functionally, catalyzes the ATP- as well as the pyrophosphate-dependent phosphorylation of a specific serine residue in HPr, a phosphocarrier protein of the phosphoenolpyruvate-dependent sugar phosphotransferase system (PTS). HprK/P also catalyzes the pyrophosphate-producing, inorganic phosphate-dependent dephosphorylation (phosphorolysis) of seryl-phosphorylated HPr (P-Ser-HPr). The two antagonistic activities of HprK/P are regulated by several intracellular metabolites, which change their concentration in response to the absence or presence of rapidly metabolisable carbon sources (glucose, fructose, etc.) in the growth medium. Also phosphorylates/dephosphorylates the HPr-like catabolite repression protein crh on a specific serine residue. Therefore, by controlling the phosphorylation state of HPr and crh, HPrK/P is a sensor enzyme that plays a major role in the regulation of carbon metabolism and sugar transport: it mediates carbon catabolite repression (CCR), and regulates PTS-catalyzed carbohydrate uptake and inducer exclusion. This Bacillus anthracis (strain A0248) protein is HPr kinase/phosphorylase.